The primary structure comprises 300 residues: Tyrosine recombinase XerD (300 aa).

Residues 5 to 90 form the Core-binding (CB) domain; it reads YQCDPLIDAF…SLRRFYNYLL (86 aa). Residues 111 to 294 form the Tyr recombinase domain; sequence HLPDSLSESQ…ARARLQELHQ (184 aa). Active-site residues include Arg-151, Lys-175, His-246, Arg-249, and His-272. Catalysis depends on Tyr-281, which acts as the O-(3'-phospho-DNA)-tyrosine intermediate.

It belongs to the 'phage' integrase family. XerD subfamily. In terms of assembly, forms a cyclic heterotetrameric complex composed of two molecules of XerC and two molecules of XerD.

Its subcellular location is the cytoplasm. Its function is as follows. Site-specific tyrosine recombinase, which acts by catalyzing the cutting and rejoining of the recombining DNA molecules. The XerC-XerD complex is essential to convert dimers of the bacterial chromosome into monomers to permit their segregation at cell division. It also contributes to the segregational stability of plasmids. The protein is Tyrosine recombinase XerD of Shewanella oneidensis (strain ATCC 700550 / JCM 31522 / CIP 106686 / LMG 19005 / NCIMB 14063 / MR-1).